A 122-amino-acid chain; its full sequence is Large ribosomal subunit protein uL18 (122 aa).

The protein belongs to the universal ribosomal protein uL18 family. In terms of assembly, part of the 50S ribosomal subunit; part of the 5S rRNA/L5/L18/L25 subcomplex. Contacts the 5S and 23S rRNAs.

In terms of biological role, this is one of the proteins that bind and probably mediate the attachment of the 5S RNA into the large ribosomal subunit, where it forms part of the central protuberance. The chain is Large ribosomal subunit protein uL18 from Desulfitobacterium hafniense (strain DSM 10664 / DCB-2).